The following is a 454-amino-acid chain: Cytochrome b-c1 complex subunit 2, mitochondrial (454 aa).

The N-terminal 35 residues, 1–35, are a transit peptide targeting the mitochondrion; that stretch reads MISRSALSRGSQLALRRPAAAKTAQRGFAAAAASP.

This sequence belongs to the peptidase M16 family. UQCRC2/QCR2 subfamily. In terms of assembly, component of the ubiquinol-cytochrome c oxidoreductase (cytochrome b-c1 complex, complex III, CIII), a multisubunit enzyme composed of 10 subunits. The complex is composed of 3 respiratory subunits cytochrome b (cob), cytochrome c1 (cyt-1) and Rieske protein (fes-1), 2 core protein subunits pep and ucr-1, and 5 low-molecular weight protein subunits qcr6, qcr7, qcr8, qcr9 and probably NCU16844/qcr10. The complex exists as an obligatory dimer and forms supercomplexes (SCs) in the inner mitochondrial membrane with NADH-ubiquinone oxidoreductase (complex I, CI) and cytochrome c oxidase (complex IV, CIV), resulting in different assemblies (supercomplexes SCI(1)III(2), SCIII(2)IV(1) and SCIII(2)IV(2) as well as higher order I(x)III(y)IV(z) megacomplexes).

The protein resides in the mitochondrion inner membrane. Component of the ubiquinol-cytochrome c oxidoreductase, a multisubunit transmembrane complex that is part of the mitochondrial electron transport chain which drives oxidative phosphorylation. The respiratory chain contains 3 multisubunit complexes succinate dehydrogenase (complex II, CII), ubiquinol-cytochrome c oxidoreductase (cytochrome b-c1 complex, complex III, CIII) and cytochrome c oxidase (complex IV, CIV), that cooperate to transfer electrons derived from NADH and succinate to molecular oxygen, creating an electrochemical gradient over the inner membrane that drives transmembrane transport and the ATP synthase. The cytochrome b-c1 complex catalyzes electron transfer from ubiquinol to cytochrome c, linking this redox reaction to translocation of protons across the mitochondrial inner membrane, with protons being carried across the membrane as hydrogens on the quinol. In the process called Q cycle, 2 protons are consumed from the matrix, 4 protons are released into the intermembrane space and 2 electrons are passed to cytochrome c. The chain is Cytochrome b-c1 complex subunit 2, mitochondrial (ucr-1) from Neurospora crassa (strain ATCC 24698 / 74-OR23-1A / CBS 708.71 / DSM 1257 / FGSC 987).